We begin with the raw amino-acid sequence, 655 residues long: p-hydroxybenzoic acid efflux pump subunit AaeB (655 aa).

The next 11 membrane-spanning stretches (helical) occupy residues Phe-13 to Leu-33, Trp-38 to Pro-58, Leu-69 to Ile-89, Leu-93 to Val-113, Trp-121 to Leu-141, Glu-152 to Ile-172, Leu-370 to Val-390, Phe-407 to Pro-427, Gln-431 to Val-451, Leu-455 to Met-475, and Phe-482 to Leu-502.

It belongs to the aromatic acid exporter ArAE (TC 2.A.85) family.

It is found in the cell inner membrane. Its function is as follows. Forms an efflux pump with AaeA. Could function as a metabolic relief valve, allowing to eliminate certain compounds when they accumulate to high levels in the cell. This is p-hydroxybenzoic acid efflux pump subunit AaeB from Shigella boydii serotype 4 (strain Sb227).